Reading from the N-terminus, the 67-residue chain is Bowman-Birk type proteinase inhibitor A6 (67 aa).

Disulfide bonds link C9–C66, C10–C29, C13–C62, C16–C27, C36–C43, and C40–C54.

The protein belongs to the Bowman-Birk serine protease inhibitor family. As to expression, expressed in bulb (at protein level).

Its function is as follows. Serine protease inhibitor. Strongly inhibits trypsin (Ki = 4 nM) and elastase (Ki = 4.8 nM). Also inhibits chymotrypsin with a Ki of 22 nM. Does not inhibit bacterial subtilisin. In Hyacinthus orientalis (Common hyacinth), this protein is Bowman-Birk type proteinase inhibitor A6.